Reading from the N-terminus, the 935-residue chain is Bifunctional alpha-galactosidase/sucrose kinase AgaSK (935 aa).

The tract at residues 1–720 is alpha-galactosidase; the sequence is MAIIYNPNKK…EAYQFAFTEL (720 aa). Positions 176, 277, and 280 each coordinate Mg(2+). Substrate is bound by residues 366–367, Arg443, 476–480, and 518–521; these read DD, KWDMN, and CSGG. The active-site Nucleophile is Asp526. Asp540 contacts substrate. Glu606 serves as the catalytic Proton donor/acceptor. A sucrose kinase region spans residues 721–935; that stretch reads KEAGRLYEKV…VGKDGSVYEQ (215 aa). ATP-binding positions include 748–752 and Ala824; that span reads GGSGS.

In the N-terminal section; belongs to the glycosyl hydrolase 36 family. It in the C-terminal section; belongs to the uridine kinase family. Homotetramer. Mg(2+) serves as cofactor.

It catalyses the reaction Hydrolysis of terminal, non-reducing alpha-D-galactose residues in alpha-D-galactosides, including galactose oligosaccharides, galactomannans and galactolipids.. Functionally, bifunctional enzyme with alpha-galactosidase and sucrose kinase activities. Produces sucrose-6-phosphate directly from raffinose. Binds ATP. Phosphorylates sucrose specifically on the C6 position of glucose in the presence of ATP. Hydrolyzes melibiose, raffinose, stachyose and synthetic substrate p-nitrophenyl-alpha-D-galactopyranoside with high activity. Low activity against locust bean gum, guar gum and synthetic substrates xylose alpha-D-4-nitrophenol, glucose alpha-D-4-nitrophenol and o-nitrophenyl-alpha-D-galactopyranoside. The polypeptide is Bifunctional alpha-galactosidase/sucrose kinase AgaSK (Mediterraneibacter gnavus (Ruminococcus gnavus)).